We begin with the raw amino-acid sequence, 385 residues long: Histidinol-phosphate aminotransferase (385 aa).

Position 230 is an N6-(pyridoxal phosphate)lysine (K230).

It belongs to the class-II pyridoxal-phosphate-dependent aminotransferase family. It depends on pyridoxal 5'-phosphate as a cofactor.

It catalyses the reaction L-histidinol phosphate + 2-oxoglutarate = 3-(imidazol-4-yl)-2-oxopropyl phosphate + L-glutamate. It participates in amino-acid biosynthesis; L-histidine biosynthesis; L-histidine from 5-phospho-alpha-D-ribose 1-diphosphate: step 7/9. The protein is Histidinol-phosphate aminotransferase of Saccharomyces cerevisiae (strain ATCC 204508 / S288c) (Baker's yeast).